The primary structure comprises 909 residues: UPF0182 protein H16_A1615 (909 aa).

Transmembrane regions (helical) follow at residues 16–36, 58–78, 114–134, 169–189, 205–225, 246–266, and 281–301; these read TWVVAVIVALIAVSRVTGLVV, ALLFLAVFAVSAGALWLSGWL, VAVLVGLLMAVGELSSWAIAL, WLLLLLGCSAVLAGVVYGLRG, ATHGSALLGLFFALQAWSYWL, VHVGLPVLWLQVGLAAAAAAA, and AAALLVVGSAIVLGTIWPALF.

It belongs to the UPF0182 family.

It localises to the cell membrane. This is UPF0182 protein H16_A1615 from Cupriavidus necator (strain ATCC 17699 / DSM 428 / KCTC 22496 / NCIMB 10442 / H16 / Stanier 337) (Ralstonia eutropha).